We begin with the raw amino-acid sequence, 562 residues long: Cell division protein FtsZ (562 aa).

GTP contacts are provided by residues 23 to 27, 110 to 112, Glu141, Arg145, and Asp189; these read GAGGN and GTG. The segment covering 404-413 has biased composition (low complexity); it reads PAAARPAQQP. Disordered regions lie at residues 404 to 428 and 462 to 562; these read PAAARPAQQPMAETFRPDPQLRLDP and ETAQ…RQAN. Positions 418–428 are enriched in basic and acidic residues; the sequence is FRPDPQLRLDP. 2 stretches are compositionally biased toward low complexity: residues 464-486 and 500-510; these read AQAAPQPQRQPEIQRQQAPQPQR and GLLRRPAAAQP.

This sequence belongs to the FtsZ family. Homodimer. Polymerizes to form a dynamic ring structure in a strictly GTP-dependent manner. Interacts directly with several other division proteins. Interacts with FtsZ-like protein (also called FtsZm).

It is found in the cytoplasm. Essential cell division protein that forms a contractile ring structure (Z ring) at the future cell division site. The regulation of the ring assembly controls the timing and the location of cell division. One of the functions of the FtsZ ring is to recruit other cell division proteins to the septum to produce a new cell wall between the dividing cells. Binds GTP and shows GTPase activity. Mild overexpression impairs cell division, leading to very elongated cells. Isolated protein forms filaments and bundles in the presence of GTP. This is Cell division protein FtsZ from Magnetospirillum gryphiswaldense (strain DSM 6361 / JCM 21280 / NBRC 15271 / MSR-1).